A 695-amino-acid chain; its full sequence is DNA ligase (695 aa).

NAD(+) contacts are provided by residues 44-48, 93-94, and glutamate 123; these read DAEYD and SL. The active-site N6-AMP-lysine intermediate is the lysine 125. NAD(+) is bound by residues arginine 146, glutamate 184, lysine 300, and lysine 324. Positions 418, 421, 436, and 442 each coordinate Zn(2+). In terms of domain architecture, BRCT spans 605–694; that stretch reads SAAKPLAGIT…PDAARSMAQR (90 aa).

This sequence belongs to the NAD-dependent DNA ligase family. LigA subfamily. Mg(2+) serves as cofactor. The cofactor is Mn(2+).

It carries out the reaction NAD(+) + (deoxyribonucleotide)n-3'-hydroxyl + 5'-phospho-(deoxyribonucleotide)m = (deoxyribonucleotide)n+m + AMP + beta-nicotinamide D-nucleotide.. Its function is as follows. DNA ligase that catalyzes the formation of phosphodiester linkages between 5'-phosphoryl and 3'-hydroxyl groups in double-stranded DNA using NAD as a coenzyme and as the energy source for the reaction. It is essential for DNA replication and repair of damaged DNA. The chain is DNA ligase from Acidothermus cellulolyticus (strain ATCC 43068 / DSM 8971 / 11B).